Reading from the N-terminus, the 1386-residue chain is DNA-directed RNA polymerase subunit beta (1386 aa).

This sequence belongs to the RNA polymerase beta chain family. As to quaternary structure, in plastids the minimal PEP RNA polymerase catalytic core is composed of four subunits: alpha, beta, beta', and beta''. When a (nuclear-encoded) sigma factor is associated with the core the holoenzyme is formed, which can initiate transcription.

Its subcellular location is the plastid. It localises to the chloroplast. The catalysed reaction is RNA(n) + a ribonucleoside 5'-triphosphate = RNA(n+1) + diphosphate. DNA-dependent RNA polymerase catalyzes the transcription of DNA into RNA using the four ribonucleoside triphosphates as substrates. The sequence is that of DNA-directed RNA polymerase subunit beta from Thalassiosira pseudonana (Marine diatom).